We begin with the raw amino-acid sequence, 269 residues long: Cytochrome c oxidase subunit 3 (269 aa).

Helical transmembrane passes span 19-39, 44-64, 87-107, 135-155, 170-190, 205-225, and 247-267; these read PWPF…TLYL, HSSV…YLWF, IGFM…FWAF, LEVP…LTYA, GLYM…YEYW, FYFA…LLLA, and IYYW…IYIW.

The protein belongs to the cytochrome c oxidase subunit 3 family. Component of the cytochrome c oxidase (complex IV, CIV), a multisubunit enzyme composed of a catalytic core of 3 subunits and several supernumerary subunits. The complex exists as a monomer or a dimer and forms supercomplexes (SCs) in the inner mitochondrial membrane with ubiquinol-cytochrome c oxidoreductase (cytochrome b-c1 complex, complex III, CIII).

It localises to the mitochondrion inner membrane. It carries out the reaction 4 Fe(II)-[cytochrome c] + O2 + 8 H(+)(in) = 4 Fe(III)-[cytochrome c] + 2 H2O + 4 H(+)(out). In terms of biological role, component of the cytochrome c oxidase, the last enzyme in the mitochondrial electron transport chain which drives oxidative phosphorylation. The respiratory chain contains 3 multisubunit complexes succinate dehydrogenase (complex II, CII), ubiquinol-cytochrome c oxidoreductase (cytochrome b-c1 complex, complex III, CIII) and cytochrome c oxidase (complex IV, CIV), that cooperate to transfer electrons derived from NADH and succinate to molecular oxygen, creating an electrochemical gradient over the inner membrane that drives transmembrane transport and the ATP synthase. Cytochrome c oxidase is the component of the respiratory chain that catalyzes the reduction of oxygen to water. Electrons originating from reduced cytochrome c in the intermembrane space (IMS) are transferred via the dinuclear copper A center (CU(A)) of subunit 2 and heme A of subunit 1 to the active site in subunit 1, a binuclear center (BNC) formed by heme A3 and copper B (CU(B)). The BNC reduces molecular oxygen to 2 water molecules using 4 electrons from cytochrome c in the IMS and 4 protons from the mitochondrial matrix. This chain is Cytochrome c oxidase subunit 3 (cox3), found in Schizosaccharomyces pombe (strain 972 / ATCC 24843) (Fission yeast).